The sequence spans 1199 residues: MRAEKQYTRNEVEETIVRWKKLKESGATEHDNTEYAQLCDVLRSAQSEIEARRDLKGHIKRCFSSVDKNTEKLILKQQVLAYKKLSQNLPAPDDCILSVLLRLSKDEQLLQSIVKQPLQNSKVDGKVRRDFGSCQITPSAKQQRKYLQYQISEDDAIKNRMFRRMSDLESYPAVMRDVAELKDDNERLNLDTIKRNALVELKKLRLIKQQESLRHQVMHCQPHLRTIVNAVERMSCRRPKLVPQATRLTEVLERQQRSDRERRLKQKQCDYLQTVCAHGREINVRTKNAQARAQKANRAVLAYHSHIEKEEQRRAERNAKQRLQALKENDEEAYLKLIDQAKDTRITHLLRQTDHYLDSLAAAVKVQQSQFGESAYDEDMDRRMNPEDDRKIDYYNVAHNIREVVTEQPSILVGGKLKEYQLRGLQWMISLYNNHLNGILADEMGLGKTIQTISLITHLIEKKRQNGPFLVIVPLSTLTNWTMEFERWAPSIVKIVYKGPPQVRKALHPQVRHSNFQVLLTTYEYIIKDRPLLSRIKWIYMIIDEGHRMKNTQSKLTNTLTTYYSSRYRLILTGTPLQNNLPELWALLNFVLPRIFNSIKSFDEWFNTPFANTGGQDKMELTEEESLLVIRRLHKVLRPFLLRRLKKDVEAELPDKVEKVIRCQMSGLQQKLYYQMKKHGMLYVEDAKRGKTGIKGLQNTVMQLKKICNHPFVFEDVERSIDPTGFNYDMLWRVSGKFELLDRILPKLFRSGHRILMFFQMTQIMNIMEDYLHYRQWRYLRLDGSTKADDRSKLLGVFNDPTAEVNLFLLSTRAGGLGLNLQTADTVIIFDSDWNPHQDLQAQDRAHRIGQTKEVRIYRLITEKSVEENILARAQYKLDIDGKVIQAGKFDNKSTPEEREAFLRSLLENENGEEENDEKGELDDDELNEILARGDDELRLFKQMTEDLERESPYGKNKEKERLIQVSELPEFYQREEPEKTTDLLQEEPLGRGARRRTPVVYDEAVRDAQWMAEMDMESEARPTRGRPKRNIASVDETPALTLNGKPKKKRGPAPDTLTSEHRSLLRRVCLEIYKAVNELEDDNGRPLNKLFLELPSKKLYPDYYMIIKSPIALDAIRKHINGTFYKTLEAMKSDLMTMFNNARTYNEEGSFVYEDANKMQTAMETKIEELEEDGTLATLRGMEAEATSQLEDRIENEA.

The 73-residue stretch at 256–328 folds into the HSA domain; it reads QRSDRERRLK…AKQRLQALKE (73 aa). The 166-residue stretch at 429-594 folds into the Helicase ATP-binding domain; sequence ISLYNNHLNG…WALLNFVLPR (166 aa). 442–449 contacts ATP; that stretch reads DEMGLGKT. Residues 544–547 carry the DEGH box motif; it reads DEGH. In terms of domain architecture, Helicase C-terminal spans 740 to 903; sequence LLDRILPKLF…STPEEREAFL (164 aa). Positions 1017 to 1059 are disordered; sequence MESEARPTRGRPKRNIASVDETPALTLNGKPKKKRGPAPDTLT. Residues 1061–1171 form the Bromo domain; sequence EHRSLLRRVC…TAMETKIEEL (111 aa).

This sequence belongs to the SNF2/RAD54 helicase family. Component of the RSC complex composed of at least arp9, arp42, rsc1, rsc4, rsc7, rsc9, rsc58, sfh1, snf21, ssr1, ssr2, ssr3 and ssr4. The complex interacts with histone and histone variant components of centromeric chromatin.

Its subcellular location is the nucleus. Its function is as follows. Helicase. Component of the chromatin structure remodeling complex (RSC), which is involved in transcription regulation and nucleosome positioning. Controls particularly membrane and organelle development genes. The chain is Chromatin structure-remodeling complex subunit snf21 (snf21) from Schizosaccharomyces pombe (strain 972 / ATCC 24843) (Fission yeast).